Reading from the N-terminus, the 143-residue chain is Hemoglobin subunit alpha (143 aa).

Residues 2–143 (TLSDKDKSTV…VALALAERYR (142 aa)) enclose the Globin domain. Position 60 (histidine 60) interacts with O2. Position 89 (histidine 89) interacts with heme b.

The protein belongs to the globin family. In terms of assembly, heterotetramer of two alpha chains and two beta chains. As to expression, red blood cells.

Its function is as follows. Involved in oxygen transport from gills to the various peripheral tissues. The polypeptide is Hemoglobin subunit alpha (hba) (Thunnus thynnus (Atlantic bluefin tuna)).